Reading from the N-terminus, the 61-residue chain is Large ribosomal subunit protein bL32 (61 aa).

Positions 1–44 (MAVQQNRKSRSRRDMRRSHDALTENALTVDQTTGETHRRHHVTK) are disordered. Residues 7–16 (RKSRSRRDMR) show a composition bias toward basic residues. Polar residues predominate over residues 25–34 (NALTVDQTTG).

The protein belongs to the bacterial ribosomal protein bL32 family.

The chain is Large ribosomal subunit protein bL32 from Acinetobacter baylyi (strain ATCC 33305 / BD413 / ADP1).